The primary structure comprises 389 residues: MGKKQVALPRALPPMPSTSIDEIPHSRPKKKKTKSNNNTPDDVLQNAGFTTSENNDPLSPERRKRKKKRFSIDAETSLTQNNPSIPVVLNGKDTDNQTTEEGATRKPRRRTKKTRLAEEEFPNELGVEDEDIIPDGHTKIPTQNPAFLASSLTSQPVGKLFVEKNRRFQAADRSEIIKTTEQMDVFLDVKPTWSSMDVSLTAHHIFRMVGLFCCGFLAGYAVWNIVVIYVLAGSQLTNLPNLLQTYKILAYPSQCFLYFLLVLSTVTAFDRIDLERAADALRGLLKLDPAAVASFFYFVALFLVLSQQMTSDRMNFYTPPTQNGSLWQTDTEGQILQPWIVINLVVAILVGLAWLFLSCRPDIDHSEEAMFIPEEEDYPDMEKGMKIQG.

The interval 1–116 is disordered; that stretch reads MGKKQVALPR…PRRRTKKTRL (116 aa). Polar residues-rich tracts occupy residues 47–57 and 74–84; these read AGFTTSENNDP and AETSLTQNNPS. The span at 105-114 shows a compositional bias: basic residues; that stretch reads RKPRRRTKKT. 4 helical membrane passes run 211–231, 248–268, 284–304, and 339–359; these read LFCC…IYVL, ILAY…TVTA, LLKL…LFLV, and WIVI…FLSC.

This sequence belongs to the TMEM237 family.

Its subcellular location is the membrane. It localises to the cell projection. The protein resides in the cilium. Component of the transition zone in primary cilia. Required for ciliogenesis. The sequence is that of Transmembrane protein 237 (tmem237) from Xenopus laevis (African clawed frog).